A 617-amino-acid polypeptide reads, in one-letter code: pH-sensitive chloride channel 2 (617 aa).

The signal sequence occupies residues 1 to 28; sequence MHSPGAAAYVFLQCLVALVAAVIAQSGA. Topologically, residues 29–387 are extracellular; sequence DQPPTTVVEV…VHLAREMGFY (359 aa). Asn-57 carries N-linked (GlcNAc...) asparagine glycosylation. The segment covering 82–96 has biased composition (low complexity); sequence TVSVDSSSTTTVAST. Positions 82 to 110 are disordered; it reads TVSVDSSSTTTVASTQEPTSTTERTMSPE. Over residues 97-106 the composition is skewed to polar residues; sequence QEPTSTTERT. N-linked (GlcNAc...) asparagine glycosylation occurs at Asn-130. Over residues 131–147 the composition is skewed to basic and acidic residues; sequence ATDDNRPDAKSSGKDSE. The interval 131–155 is disordered; it reads ATDDNRPDAKSSGKDSECPTLEGAD. N-linked (GlcNAc...) asparagine glycans are attached at residues Asn-184, Asn-234, Asn-351, and Asn-370. A helical transmembrane segment spans residues 388–408; the sequence is MMDYFIPSIMLVAISWVTFWL. At 409–414 the chain is on the cytoplasmic side; it reads QADQSA. Residues 415 to 434 form a helical membrane-spanning segment; the sequence is PRITLGTSTMLTFITLASAQ. Residues 435-447 are Extracellular-facing; it reads GKTLPKVSYIKAS. A helical transmembrane segment spans residues 448–468; it reads EIWFLGCTGFIFGSLVEFAFV. Residues 469-596 lie on the Cytoplasmic side of the membrane; the sequence is NTIWRRKRNV…VAIWIDKRSR (128 aa). A helical membrane pass occupies residues 597–617; that stretch reads FVFPIAFVIFNIFYWTFVYYV.

This sequence belongs to the ligand-gated ion channel (TC 1.A.9) family.

The protein resides in the cell membrane. The enzyme catalyses chloride(in) = chloride(out). Functionally, ligand and pH-gated channel that mediates chloride transport in the mid-gut and thereby may function in larval metabolism and fluid homeostasis. Channel opening is triggered by zinc binding or, to a lesser extent, an increase in extracellular pH. The sequence is that of pH-sensitive chloride channel 2 from Anopheles gambiae (African malaria mosquito).